The sequence spans 2737 residues: Non-reducing polyketide synthase ATEG_07661 (2737 aa).

The interval 75–245 is N-terminal acylcarrier protein transacylase domain (SAT); sequence SRSLAELDSW…VRYDQTRATV (171 aa). The active-site Nucleophile; for transacylase activity is the Cys154. The Proton donor/acceptor; for transacylase activity role is filled by His276. The region spanning 427 to 854 is the Ketosynthase family 3 (KS3) domain; it reads NEAIAIVGMS…GSNASMIITE (428 aa). Residues Cys603, His738, and His777 each act as for beta-ketoacyl synthase activity in the active site. Residues 969-1260 are malonyl-CoA:ACP transacylase (MAT); the sequence is FGGQVSRFVG…IMASRAIAQS (292 aa). Residues 1368 to 1503 form an N-terminal hotdog fold region; it reads LQSLWNFVEF…ASVEMRAPTD (136 aa). Residues 1368–1683 enclose the PKS/mFAS DH domain; that stretch reads LQSLWNFVEF…YGRVAKASMS (316 aa). Positions 1399–1681 are product template (PT) domain; sequence FVLSHVIAQT…VQYGRVAKAS (283 aa). His1403 functions as the Proton acceptor; for dehydratase activity in the catalytic mechanism. A C-terminal hotdog fold region spans residues 1535 to 1683; that stretch reads VEVLQGRNVY…YGRVAKASMS (149 aa). Asp1592 (proton donor; for dehydratase activity) is an active-site residue. The segment at 1724 to 1747 is disordered; sequence SRTTKKKAKASKSKSSVKKDKAPS. Basic residues predominate over residues 1725-1739; the sequence is RTTKKKAKASKSKSS. Positions 1750–1824 constitute a Carrier domain; the sequence is RDITDEVRNL…KFVACVSNAL (75 aa). Ser1784 is modified (O-(pantetheine 4'-phosphoryl)serine). The disordered stretch occupies residues 1827–1876; that stretch reads PNQGQSSIDEDDEDDEHSEDSSNESSSAASDEDASSGLESPDTGILTPED. Residues 1834-1848 show a composition bias toward acidic residues; it reads IDEDDEDDEHSEDSS. The segment covering 1849-1866 has biased composition (low complexity); the sequence is NESSSAASDEDASSGLES. The methyltransferase domain stretch occupies residues 2094-2270; sequence ADRIQSSSGS…GFGHVDWTDG (177 aa). Residues 2362-2665 are NADPH-binding domain; that stretch reads VVLVTGATGS…IPFKDWISRV (304 aa).

Its pathway is secondary metabolite biosynthesis. Non-reducing polyketide synthase; part of the cluster B that mediates the biosynthesis of azasperpyranones, members of the azaphilone family that exhibit anti-cancer activities. Azasperpyranones are synthesized by 2 clusters, A and B. Cluster A is responsible for the production of the polyhydric phenol moiety while the azaphilonoid scaffold is produced by the cluster B. The non-reducing polyketide synthase ATEG_03629 produces 5-methyl orsellinic acid, which is then reduced to 5-methyl orsellinic aldehyde by the NRPS-like protein ATEG_03630. 5-methyl orsellinic aldehyde is then first hydroxylated by the FAD-dependent monooxygenase ATEG_03635 and subsequently hydroxylated by the cytochrome P450 monooxygenase ATEG_03631 to produce the unstable polyhydric phenol precursor of azasperpyranones. On the other hand, the polyketide synthase ATEG_07659 is responsible for producing the 3,5-dimethyloctadienone moiety from acetyl-CoA, three malonyl-CoA, and two S-adenosyl methionines (SAM). The 3,5-dimethyloctadienone moiety is then loaded onto the SAT domain of ATEG_07661 and extended with four malonyl-CoA and one SAM, which leads to the formation of 2,4-dihydroxy-6-(5,7-dimethyl-2-oxo-trans-3-trans-5-nonadienyl)-3-methylbenzaldehyde (compound 8) after reductive release and aldol condensation. The FAD-dependent monooxygenase ATEG_07662 is the next enzyme in the biosynthesis sequence and hydroxylates the side chain at the benzylic position of compound 8. In Aspergillus nidulans, afoF, the ortholog of the FAD-dependent oxygenase ATEG_07660, is the key enzyme for the biosynthesis of asperfuranone by catalyzing the hydroxylation at C-8 of to prevent the formation of a six-membered ring hemiacetal intermediate and thus facilitating the formation of a five-membered ring to produce asperfuranone. In Aspergillus terreus, ATEG_07660 is probably not functional, which leads to the formation of the six-membered ring hemiacetal intermediate presperpyranone instead of asperfuranone. Finally, ATEG_03636 is involved in the condensation of the polyhydric phenol moiety produced by cluster A and the perasperpyranone precursor produced by cluster B, to yield azasperpyranone A. Further modifications of azasperpyranone A result in the production of derivatives, including azasperpyranone B to F. This chain is Non-reducing polyketide synthase ATEG_07661, found in Aspergillus terreus (strain NIH 2624 / FGSC A1156).